Consider the following 66-residue polypeptide: Large ribosomal subunit protein uL29 (66 aa).

It belongs to the universal ribosomal protein uL29 family.

This Geobacillus thermodenitrificans (strain NG80-2) protein is Large ribosomal subunit protein uL29.